The sequence spans 629 residues: tRNA uridine 5-carboxymethylaminomethyl modification enzyme MnmG (629 aa).

13 to 18 (GGGHAG) serves as a coordination point for FAD. 273–287 (GPRYCPSIEDKIHRF) is a binding site for NAD(+).

It belongs to the MnmG family. Homodimer. Heterotetramer of two MnmE and two MnmG subunits. It depends on FAD as a cofactor.

Its subcellular location is the cytoplasm. Functionally, NAD-binding protein involved in the addition of a carboxymethylaminomethyl (cmnm) group at the wobble position (U34) of certain tRNAs, forming tRNA-cmnm(5)s(2)U34. The polypeptide is tRNA uridine 5-carboxymethylaminomethyl modification enzyme MnmG (Shewanella baltica (strain OS185)).